The primary structure comprises 331 residues: 6-phosphogluconolactonase (331 aa).

Belongs to the cycloisomerase 2 family.

It carries out the reaction 6-phospho-D-glucono-1,5-lactone + H2O = 6-phospho-D-gluconate + H(+). Its pathway is carbohydrate degradation; pentose phosphate pathway; D-ribulose 5-phosphate from D-glucose 6-phosphate (oxidative stage): step 2/3. In terms of biological role, catalyzes the hydrolysis of 6-phosphogluconolactone to 6-phosphogluconate. This Salmonella choleraesuis (strain SC-B67) protein is 6-phosphogluconolactonase.